Consider the following 601-residue polypeptide: Elongation factor 4 (601 aa).

The 183-residue stretch at 7 to 189 folds into the tr-type G domain; the sequence is ELIRNFSIIA…ALVTRLPPPK (183 aa). Residues 19–24 and 136–139 each bind GTP; these read DHGKST and NKID.

It belongs to the TRAFAC class translation factor GTPase superfamily. Classic translation factor GTPase family. LepA subfamily.

It is found in the cell inner membrane. It carries out the reaction GTP + H2O = GDP + phosphate + H(+). In terms of biological role, required for accurate and efficient protein synthesis under certain stress conditions. May act as a fidelity factor of the translation reaction, by catalyzing a one-codon backward translocation of tRNAs on improperly translocated ribosomes. Back-translocation proceeds from a post-translocation (POST) complex to a pre-translocation (PRE) complex, thus giving elongation factor G a second chance to translocate the tRNAs correctly. Binds to ribosomes in a GTP-dependent manner. In Acidiphilium cryptum (strain JF-5), this protein is Elongation factor 4.